A 405-amino-acid polypeptide reads, in one-letter code: NADH-quinone oxidoreductase subunit D (405 aa).

The protein belongs to the complex I 49 kDa subunit family. NDH-1 is composed of 14 different subunits. Subunits NuoB, C, D, E, F, and G constitute the peripheral sector of the complex.

The protein resides in the cell inner membrane. The catalysed reaction is a quinone + NADH + 5 H(+)(in) = a quinol + NAD(+) + 4 H(+)(out). In terms of biological role, NDH-1 shuttles electrons from NADH, via FMN and iron-sulfur (Fe-S) centers, to quinones in the respiratory chain. The immediate electron acceptor for the enzyme in this species is believed to be ubiquinone. Couples the redox reaction to proton translocation (for every two electrons transferred, four hydrogen ions are translocated across the cytoplasmic membrane), and thus conserves the redox energy in a proton gradient. In Leptospira interrogans serogroup Icterohaemorrhagiae serovar copenhageni (strain Fiocruz L1-130), this protein is NADH-quinone oxidoreductase subunit D.